The following is a 352-amino-acid chain: Transcription factor BHLH156 (352 aa).

The tract at residues 59-141 is disordered; sequence GGDDDDNGGV…RSKTIVSERK (83 aa). A basic motif region spans residues 130–143; sequence RDRSKTIVSERKRR. Positions 130–179 constitute a bHLH domain; it reads RDRSKTIVSERKRRVRMKEKLYELRALVPNITKMDKASIIADAVVYVKDL. Residues 144-179 form a helix-loop-helix motif region; sequence VRMKEKLYELRALVPNITKMDKASIIADAVVYVKDL. Positions 194–216 are disordered; it reads EEARPIRPPPPSAAAQRPQRQPR. The span at 206–216 shows a compositional bias: low complexity; sequence AAAQRPQRQPR.

It belongs to the bHLH protein family. Forms homodimers. Interacts with IRO2 in the nucleus. In terms of tissue distribution, expressed in the meristematic zone of lateral and primary roots.

The protein resides in the nucleus. In terms of biological role, transcription factor involved in positive regulation of genes involved in strategy II iron acquisition, including genes for mugineic acid (MA) family phytosiderophores biosynthesis, and genes involved in S-adenosylmethionine cycle and iron transport. May play a role in the regulation of iron deficiency response by promoting the nuclear localization of IRO2. Possesses transactivation activity in yeast. In Oryza sativa subsp. japonica (Rice), this protein is Transcription factor BHLH156.